Consider the following 95-residue polypeptide: Co-chaperonin GroES (95 aa).

Belongs to the GroES chaperonin family. Heptamer of 7 subunits arranged in a ring. Interacts with the chaperonin GroEL.

The protein localises to the cytoplasm. In terms of biological role, together with the chaperonin GroEL, plays an essential role in assisting protein folding. The GroEL-GroES system forms a nano-cage that allows encapsulation of the non-native substrate proteins and provides a physical environment optimized to promote and accelerate protein folding. GroES binds to the apical surface of the GroEL ring, thereby capping the opening of the GroEL channel. The chain is Co-chaperonin GroES from Streptococcus thermophilus (strain ATCC BAA-491 / LMD-9).